The chain runs to 596 residues: Estrogen receptor (596 aa).

A modulating (transactivation AF-1); mediates interaction with MACROD1 region spans residues 1 to 185 (MTMTLHTKAS…AMESAKETRY (185 aa)). A glycan (O-linked (GlcNAc) serine) is linked at serine 10. The interval 36-48 (ERPLGEVYMDSSK) is required for interaction with NCOA1. Residues 36–175 (ERPLGEVYMD…LASTSDKGSM (140 aa)) are interaction with DDX5; self-association. Phosphoserine; by CDK2 occurs at positions 104 and 106. Serine 119 bears the Phosphoserine mark. Residues 144 to 175 (EAGPPAYYRPNSDNRRQGGRERLASTSDKGSM) form a disordered region. Residues 155–166 (SDNRRQGGRERL) are compositionally biased toward basic and acidic residues. Serine 168 bears the Phosphoserine; by CK2 mark. 2 consecutive NR C4-type zinc fingers follow at residues 186–206 (CAVCNDYASGYHYGVWSCEGC) and 222–246 (CPATNQCTIDKNRRKSCQACRLRKC). The nuclear receptor DNA-binding region spans 186-251 (CAVCNDYASG…RLRKCYEVGM (66 aa)). The interval 186–311 (CAVCNDYASG…TKKNSPVLSL (126 aa)) is mediates interaction with DNTTIP2. Positions 252 to 311 (MKGGIRKDRRGGRMLKHKRQRDDGEGRNEAVPSGDMRAANLWPSPIMIKHTKKNSPVLSL) are hinge. Basic residues predominate over residues 259–270 (DRRGGRMLKHKR). Residues 259-285 (DRRGGRMLKHKRQRDDGEGRNEAVPSG) form a disordered region. Asymmetric dimethylarginine; by PRMT1 is present on arginine 261. Residues 263 to 596 (GRMLKHKRQR…GEAENFPSTV (334 aa)) are interaction with AKAP13. Positions 265-595 (MLKHKRQRDD…TGEAENFPST (331 aa)) are self-association. Residues 312 to 548 (TADQMISALL…DLLLEMLDAH (237 aa)) enclose the NR LBD domain. A transactivation AF-2 region spans residues 312–595 (TADQMISALL…TGEAENFPST (284 aa)). 17beta-estradiol contacts are provided by glutamate 354 and arginine 395. Cysteine 448 carries the S-palmitoyl cysteine lipid modification. Histidine 525 serves as a coordination point for 17beta-estradiol. Residue tyrosine 538 is modified to Phosphotyrosine; by Tyr-kinases. An O-linked (GlcNAc) threonine glycan is attached at threonine 572.

Belongs to the nuclear hormone receptor family. NR3 subfamily. Binds DNA as a homodimer. Can form a heterodimer with ESR2. Interacts with coactivator NCOA5. Interacts with PELP1, the interaction is enhanced by 17-beta-estradiol; the interaction increases ESR1 transcriptional activity. Interacts with NCOA7; the interaction is ligand-inducible. Interacts with AKAP13, CUEDC2, HEXIM1, KDM5A, MAP1S, SMARD1, and UBE1C. Interacts with MUC1; the interaction is stimulated by 7 beta-estradiol (E2) and enhances ESR1-mediated transcription. Interacts with DNTTIP2, and UIMC1. Interacts with KMT2D/MLL2. Interacts with ATAD2; the interaction is enhanced by estradiol. Interacts with KIF18A and LDB1. Interacts with RLIM (via its C-terminus). Interacts with MACROD1. Interacts with SH2D4A and PLCG. Interacts with SH2D4A; the interaction blocks binding to PLCG and inhibits estrogen-induced cell proliferation. Interacts with DYNLL1. Interacts with CCDC62; the interaction requires estradiol and appears to enhance the transcription of target genes. Interacts with NR2C1; the interaction prevents homodimerization of ESR1 and suppresses its transcriptional activity and cell growth. Interacts with DNAAF4. Interacts with PRMT2. Interacts with RBFOX2. Interacts with EP300; the interaction is estrogen-dependent and enhanced by CITED1. Interacts with CITED1; the interaction is estrogen-dependent. Interacts with FAM120B, FOXL2, PHB2 and SLC30A9. Interacts with coactivators NCOA3 and NCOA6. Interacts with STK3/MST2 only in the presence of SAV1 and vice-versa. Binds to CSNK1D. Interacts with NCOA2; NCOA2 can interact with ESR1 AF-1 and AF-2 domains simultaneously and mediate their transcriptional synergy. Interacts with DDX5. Interacts with NCOA1; the interaction seems to require a self-association of N-terminal and C-terminal regions. Interacts with ZNF366, DDX17, NFKB1, RELA, SP1 and SP3. Interacts with NRIP1. Interacts with GPER1; the interaction occurs in an estrogen-dependent manner. Interacts with CLOCK and the interaction is stimulated by estrogen. Interacts with TRIP4 (ufmylated); estrogen dependent. Interacts with LMTK3; the interaction phosphorylates ESR1 (in vitro) and protects it against proteasomal degradation. Interacts with CCAR2 (via N-terminus) in a ligand-independent manner. Interacts with ZFHX3. Interacts with SFR1 in a ligand-dependent and -independent manner. Interacts with DCAF13, LATS1 and DCAF1; regulates ESR1 ubiquitination and ubiquitin-mediated proteasomal degradation. Interacts (via DNA-binding domain) with POU4F2 (C-terminus); this interaction increases the estrogen receptor ESR1 transcriptional activity in a DNA- and ligand 17-beta-estradiol-independent manner. Interacts with ESRRB isoform 1. Interacts with UBE3A and WBP2. Interacts with GTF2B. Interacts with RBM39. In the absence of hormonal ligand, interacts with TACC1. Interacts with PI3KR1 or PI3KR2 and PTK2/FAK1. Interacts with SRC. Interacts with BAG1; the interaction is promoted in the absence of estradiol (17-beta-estradiol/E2). Interacts with and ubiquitinated by STUB1; the interaction is promoted in the absence of estradiol (17-beta-estradiol/E2). Interacts with NEDD8. Glycosylated; contains N-acetylglucosamine, probably O-linked. Post-translationally, ubiquitinated; regulated by LATS1 via DCAF1 it leads to ESR1 proteasomal degradation. Deubiquitinated by OTUB1. Ubiquitinated by STUB1/CHIP; in the CA1 hippocampal region following loss of endogenous circulating estradiol (17-beta-estradiol/E2). Ubiquitinated by UBR5, leading to its degradation: UBR5 specifically recognizes and binds ligand-bound ESR1 when it is not associated with coactivators (NCOAs). In presence of NCOAs, the UBR5-degron is not accessible, preventing its ubiquitination and degradation. In terms of processing, phosphorylated by cyclin A/CDK2 and CK1. Phosphorylation probably enhances transcriptional activity. Dephosphorylation at Ser-119 by PPP5C inhibits its transactivation activity. Phosphorylated by LMTK3 (in vitro). Palmitoylated at Cys-448 by ZDHHC7 and ZDHHC21. Palmitoylation is required for plasma membrane targeting and for rapid intracellular signaling via ERK and AKT kinases and cAMP generation, but not for signaling mediated by the nuclear hormone receptor. Post-translationally, dimethylated by PRMT1 at Arg-261. The methylation may favor cytoplasmic localization. Demethylated by JMJD6 at Arg-261.

The protein localises to the nucleus. It is found in the cytoplasm. It localises to the golgi apparatus. The protein resides in the cell membrane. In terms of biological role, nuclear hormone receptor. The steroid hormones and their receptors are involved in the regulation of eukaryotic gene expression and affect cellular proliferation and differentiation in target tissues. Ligand-dependent nuclear transactivation involves either direct homodimer binding to a palindromic estrogen response element (ERE) sequence or association with other DNA-binding transcription factors, such as AP-1/c-Jun, c-Fos, ATF-2, Sp1 and Sp3, to mediate ERE-independent signaling. Ligand binding induces a conformational change allowing subsequent or combinatorial association with multiprotein coactivator complexes through LXXLL motifs of their respective components. Mutual transrepression occurs between the estrogen receptor (ER) and NF-kappa-B in a cell-type specific manner. Decreases NF-kappa-B DNA-binding activity and inhibits NF-kappa-B-mediated transcription from the IL6 promoter and displace RELA/p65 and associated coregulators from the promoter. Recruited to the NF-kappa-B response element of the CCL2 and IL8 promoters and can displace CREBBP. Present with NF-kappa-B components RELA/p65 and NFKB1/p50 on ERE sequences. Can also act synergistically with NF-kappa-B to activate transcription involving respective recruitment adjacent response elements; the function involves CREBBP. Can activate the transcriptional activity of TFF1. Also mediates membrane-initiated estrogen signaling involving various kinase cascades. Essential for MTA1-mediated transcriptional regulation of BRCA1 and BCAS3. Maintains neuronal survival in response to ischemic reperfusion injury when in the presence of circulating estradiol (17-beta-estradiol/E2). This chain is Estrogen receptor (ESR1), found in Bos taurus (Bovine).